Here is a 631-residue protein sequence, read N- to C-terminus: 1-deoxy-D-xylulose-5-phosphate synthase (631 aa).

Residues His-73, 113 to 115, Asn-174, Tyr-285, and Glu-367 contribute to the thiamine diphosphate site; that span reads SHA. Asn-174 contacts Mg(2+).

The protein belongs to the transketolase family. DXPS subfamily. In terms of assembly, homodimer. Requires Mg(2+) as cofactor. Thiamine diphosphate is required as a cofactor.

It carries out the reaction D-glyceraldehyde 3-phosphate + pyruvate + H(+) = 1-deoxy-D-xylulose 5-phosphate + CO2. The protein operates within metabolic intermediate biosynthesis; 1-deoxy-D-xylulose 5-phosphate biosynthesis; 1-deoxy-D-xylulose 5-phosphate from D-glyceraldehyde 3-phosphate and pyruvate: step 1/1. Catalyzes the acyloin condensation reaction between C atoms 2 and 3 of pyruvate and glyceraldehyde 3-phosphate to yield 1-deoxy-D-xylulose-5-phosphate (DXP). The protein is 1-deoxy-D-xylulose-5-phosphate synthase of Streptomyces sp. (strain CL190).